The sequence spans 316 residues: Ornithine carbamoyltransferase (316 aa).

Carbamoyl phosphate is bound by residues Ser57–Thr60, Gln84, Arg108, and His135–Gln138. L-ornithine-binding positions include Asn166, Asp230, and Ser234 to Met235. Carbamoyl phosphate-binding positions include Cys269–Leu270 and Arg297.

This sequence belongs to the aspartate/ornithine carbamoyltransferase superfamily. OTCase family.

The protein localises to the cytoplasm. It carries out the reaction carbamoyl phosphate + L-ornithine = L-citrulline + phosphate + H(+). It functions in the pathway amino-acid biosynthesis; L-arginine biosynthesis; L-arginine from L-ornithine and carbamoyl phosphate: step 1/3. Reversibly catalyzes the transfer of the carbamoyl group from carbamoyl phosphate (CP) to the N(epsilon) atom of ornithine (ORN) to produce L-citrulline. The chain is Ornithine carbamoyltransferase from Bacillus cereus (strain ZK / E33L).